We begin with the raw amino-acid sequence, 325 residues long: Cytosolic Fe-S cluster assembly factor Nubp1 homolog (325 aa).

The tract at residues 1–26 (MSSGADVPSDAPAHCPGTQSDDAGKA) is disordered. [4Fe-4S] cluster is bound by residues Cys15, Cys29, Cys32, and Cys38. 68 to 75 (GKGGVGKS) serves as a coordination point for ATP. Cys243 and Cys246 together coordinate [4Fe-4S] cluster.

Belongs to the Mrp/NBP35 ATP-binding proteins family. NUBP1/NBP35 subfamily. As to quaternary structure, heterotetramer of 2 Nubp1 and 2 Nubp2 chains. [4Fe-4S] cluster serves as cofactor.

Its subcellular location is the cytoplasm. Functionally, component of the cytosolic iron-sulfur (Fe/S) protein assembly (CIA) machinery. Required for maturation of extramitochondrial Fe-S proteins. The Nubp1-Nubp2 heterotetramer forms a Fe-S scaffold complex, mediating the de novo assembly of an Fe-S cluster and its transfer to target apoproteins. The protein is Cytosolic Fe-S cluster assembly factor Nubp1 homolog of Anopheles gambiae (African malaria mosquito).